The primary structure comprises 122 residues: MIEIKLKNPEDFLKVKETLTRMGIANNKDKVLYQSCHILQKQGKYYIVHFKEMLRMDGRQVDIDGEDYQRRDSIAQLLEDWGLIVIEDSAREDLFGLTNNFRVISFKQKDDWTLKAKYTIGN.

The H-T-H motif DNA-binding region spans 15-37; that stretch reads VKETLTRMGIANNKDKVLYQSCH.

Controls the translation of a number of proteins (such as regA itself, rIIB and at least 35 others) by binding to their mRNA. The polypeptide is Translation repressor protein (regA) (Escherichia phage RB69 (Bacteriophage RB69)).